Here is a 235-residue protein sequence, read N- to C-terminus: MIPRRSSDITIKTRSDVLPFSGASSRWLQRYAPALLAVALIIAMSISLAWQAAGWLRLQRSPVAVAASPVSHESIRSDPTRLARLFGTSAQDPNAPPPATNLDLVLKGSFVQSDPKLSSAIIQRQGDKPHRYAVGGEISDGVKLHAVYRDRVELQRGGRLESLPFPHRSGGLLASADDITSENDSIEQLQSLQDENAAALRERLDALRQQMEATPIAEPAEEDSSEPTTTPTESD.

Topologically, residues 1 to 34 (MIPRRSSDITIKTRSDVLPFSGASSRWLQRYAPA) are cytoplasmic. The helical; Signal-anchor for type II membrane protein transmembrane segment at 35–55 (LLAVALIIAMSISLAWQAAGW) threads the bilayer. The Periplasmic segment spans residues 56 to 235 (LRLQRSPVAV…EPTTTPTESD (180 aa)). A disordered region spans residues 205 to 235 (DALRQQMEATPIAEPAEEDSSEPTTTPTESD). The span at 226–235 (EPTTTPTESD) shows a compositional bias: low complexity.

Its subcellular location is the cell inner membrane. Functionally, involved in a type II secretion system (T2SS, formerly general secretion pathway, GSP) for the export of proteins. Required for the translocation of a variety of enzymes across the outer membrane. This chain is Type II secretion system protein N (xcpP), found in Pseudomonas aeruginosa (strain ATCC 15692 / DSM 22644 / CIP 104116 / JCM 14847 / LMG 12228 / 1C / PRS 101 / PAO1).